The chain runs to 239 residues: Serine protease SplF (239 aa).

Positions 1 to 36 (MNKNIIIKSIAALTILTSITGVGTTVVDGIQQTAKA) are cleaved as a signal peptide. Residues H75, D114, and S192 each act as charge relay system in the active site.

It belongs to the peptidase S1B family.

It is found in the secreted. The polypeptide is Serine protease SplF (splF) (Staphylococcus aureus (strain JH9)).